The following is a 136-amino-acid chain: NADPH-dependent 7-cyano-7-deazaguanine reductase (136 aa).

The Thioimide intermediate role is filled by C50. The Proton donor role is filled by D57. Substrate is bound by residues 72-74 and 91-92; these read YEL and HE.

Belongs to the GTP cyclohydrolase I family. QueF type 1 subfamily.

The protein localises to the cytoplasm. It catalyses the reaction 7-aminomethyl-7-carbaguanine + 2 NADP(+) = 7-cyano-7-deazaguanine + 2 NADPH + 3 H(+). Its pathway is tRNA modification; tRNA-queuosine biosynthesis. In terms of biological role, catalyzes the NADPH-dependent reduction of 7-cyano-7-deazaguanine (preQ0) to 7-aminomethyl-7-deazaguanine (preQ1). This chain is NADPH-dependent 7-cyano-7-deazaguanine reductase, found in Prochlorococcus marinus (strain MIT 9301).